The sequence spans 443 residues: Serine/threonine-protein phosphatase 2A 55 kDa regulatory subunit B beta isoform (443 aa).

7 WD repeats span residues 22-61, 87-128, 171-209, 220-260, 279-317, 334-375, and 410-443; these read TEAD…KSQP, EIEE…KRPE, AHTY…RSFN, ELTE…LCDN, EIIS…KPLE, ENDC…DVTL, and DFSK…DKVN.

It belongs to the phosphatase 2A regulatory subunit B family. In terms of assembly, PP2A consists of a common heterodimeric core enzyme, composed of a 36 kDa catalytic subunit (subunit C) and a 65 kDa constant regulatory subunit (PR65 or subunit A), that associates with a variety of regulatory subunits.

Its subcellular location is the cytoplasm. It is found in the cytoskeleton. The protein localises to the membrane. In terms of biological role, the B regulatory subunit might modulate substrate selectivity and catalytic activity, and might also direct the localization of the catalytic enzyme to a particular subcellular compartment. The polypeptide is Serine/threonine-protein phosphatase 2A 55 kDa regulatory subunit B beta isoform (ppp2r2b) (Carassius auratus (Goldfish)).